A 351-amino-acid chain; its full sequence is Anthranilate phosphoribosyltransferase (351 aa).

Residues G84, 87 to 88 (GD), 95 to 98 (NISS), 113 to 121 (KHGNRGASS), and A125 contribute to the 5-phospho-alpha-D-ribose 1-diphosphate site. G84 provides a ligand contact to anthranilate. S97 is a Mg(2+) binding site. An anthranilate-binding site is contributed by N116. Anthranilate is bound at residue R171. 2 residues coordinate Mg(2+): D229 and K230.

It belongs to the anthranilate phosphoribosyltransferase family. As to quaternary structure, homodimer. Requires Mg(2+) as cofactor.

It catalyses the reaction N-(5-phospho-beta-D-ribosyl)anthranilate + diphosphate = 5-phospho-alpha-D-ribose 1-diphosphate + anthranilate. The protein operates within amino-acid biosynthesis; L-tryptophan biosynthesis; L-tryptophan from chorismate: step 2/5. In terms of biological role, catalyzes the transfer of the phosphoribosyl group of 5-phosphorylribose-1-pyrophosphate (PRPP) to anthranilate to yield N-(5'-phosphoribosyl)-anthranilate (PRA). The chain is Anthranilate phosphoribosyltransferase from Clavibacter michiganensis subsp. michiganensis (strain NCPPB 382).